Here is a 269-residue protein sequence, read N- to C-terminus: Putative hydro-lyase Swoo_1731 (269 aa).

The protein belongs to the D-glutamate cyclase family.

The protein is Putative hydro-lyase Swoo_1731 of Shewanella woodyi (strain ATCC 51908 / MS32).